A 99-amino-acid polypeptide reads, in one-letter code: Seminal vesicle secretory protein 6 (99 aa).

The first 21 residues, 1-21 (MSPTSFFLLTMLLVLVTETAA), serve as a signal peptide directing secretion.

The protein belongs to the SVP2/SVP5/SVP6 family. As to expression, testis.

Its subcellular location is the secreted. It localises to the extracellular space. This is Seminal vesicle secretory protein 6 (Svs6) from Mus musculus (Mouse).